We begin with the raw amino-acid sequence, 257 residues long: Cobalt transport protein CbiM (257 aa).

The signal sequence occupies residues 1-33; sequence MVKPTQAKRYASLGAIALLTTSLVVASPNPALA. 6 consecutive transmembrane segments (helical) span residues 39–59, 74–94, 117–137, 138–158, 171–191, and 214–234; these read GFLP…FLAW, SVLL…LKIP, LMAV…AHGG, LTTL…LAWL, AIAL…LTSL, and LFAV…VLVW.

It belongs to the CbiM family. As to quaternary structure, forms an energy-coupling factor (ECF) transporter complex composed of an ATP-binding protein (A component, CbiO), a transmembrane protein (T component, CbiQ) and 2 possible substrate-capture proteins (S components, CbiM and CbiN) of unknown stoichimetry.

The protein resides in the cell inner membrane. Its pathway is cofactor biosynthesis; adenosylcobalamin biosynthesis. Part of the energy-coupling factor (ECF) transporter complex CbiMNOQ involved in cobalt import. The polypeptide is Cobalt transport protein CbiM (Thermosynechococcus vestitus (strain NIES-2133 / IAM M-273 / BP-1)).